A 157-amino-acid polypeptide reads, in one-letter code: SsrA-binding protein (157 aa).

Basic and acidic residues predominate over residues 136-151 (KRETSAKRDWSREKQR). A disordered region spans residues 136 to 157 (KRETSAKRDWSREKQRLLKQNS).

This sequence belongs to the SmpB family.

Its subcellular location is the cytoplasm. Required for rescue of stalled ribosomes mediated by trans-translation. Binds to transfer-messenger RNA (tmRNA), required for stable association of tmRNA with ribosomes. tmRNA and SmpB together mimic tRNA shape, replacing the anticodon stem-loop with SmpB. tmRNA is encoded by the ssrA gene; the 2 termini fold to resemble tRNA(Ala) and it encodes a 'tag peptide', a short internal open reading frame. During trans-translation Ala-aminoacylated tmRNA acts like a tRNA, entering the A-site of stalled ribosomes, displacing the stalled mRNA. The ribosome then switches to translate the ORF on the tmRNA; the nascent peptide is terminated with the 'tag peptide' encoded by the tmRNA and targeted for degradation. The ribosome is freed to recommence translation, which seems to be the essential function of trans-translation. The chain is SsrA-binding protein from Cereibacter sphaeroides (strain ATCC 17029 / ATH 2.4.9) (Rhodobacter sphaeroides).